A 249-amino-acid chain; its full sequence is MNVLSCSINTLTLRGLYDISGVEVGQHFYWKIGGFQVHAQVLITSWVVIAILLGSAIVAVRNPQTIPTGGQNFFEYVLEFIRDVSKTQIGEEYGPWVPFIGTMFLFIFVSNWAGALLPWKIIQLPHGELAAPTNDINTTVALALLTSIAYFYAGLSKKGLGYFSKYIQPTPILLPINILEDFTKPLSLSFRLFGNILADELVVVVLVSLVPSVVPIPVMFLGLFTSGIQALIFATLAAAYIGESMEGHH.

Helical transmembrane passes span 40 to 60, 97 to 117, 136 to 156, 201 to 221, and 222 to 242; these read QVLI…IVAV, VPFI…GALL, INTT…AGLS, LVVV…VMFL, and GLFT…AYIG.

The protein belongs to the ATPase A chain family. As to quaternary structure, F-type ATPases have 2 components, CF(1) - the catalytic core - and CF(0) - the membrane proton channel. CF(1) has five subunits: alpha(3), beta(3), gamma(1), delta(1), epsilon(1). CF(0) has four main subunits: a, b, b' and c.

The protein resides in the plastid. It is found in the chloroplast thylakoid membrane. In terms of biological role, key component of the proton channel; it plays a direct role in the translocation of protons across the membrane. The polypeptide is ATP synthase subunit a, chloroplastic (Manihot esculenta (Cassava)).